Here is a 330-residue protein sequence, read N- to C-terminus: Phosphate acyltransferase (330 aa).

The protein belongs to the PlsX family. As to quaternary structure, homodimer. Probably interacts with PlsY.

The protein localises to the cytoplasm. It carries out the reaction a fatty acyl-[ACP] + phosphate = an acyl phosphate + holo-[ACP]. It functions in the pathway lipid metabolism; phospholipid metabolism. Catalyzes the reversible formation of acyl-phosphate (acyl-PO(4)) from acyl-[acyl-carrier-protein] (acyl-ACP). This enzyme utilizes acyl-ACP as fatty acyl donor, but not acyl-CoA. This chain is Phosphate acyltransferase, found in Lysinibacillus sphaericus (strain C3-41).